We begin with the raw amino-acid sequence, 185 residues long: Kunitz-type serine protease inhibitor DrTI (185 aa).

2 disulfide bridges follow: C44/C89 and C139/C147.

It belongs to the protease inhibitor I3 (leguminous Kunitz-type inhibitor) family.

It localises to the secreted. Inhibits bovine trypsin and human plasma kallikrein. This chain is Kunitz-type serine protease inhibitor DrTI, found in Delonix regia (Royal poinciana).